The sequence spans 97 residues: DNA-binding protein NEQ150 (97 aa).

It belongs to the PDCD5 family.

This is DNA-binding protein NEQ150 from Nanoarchaeum equitans (strain Kin4-M).